The primary structure comprises 846 residues: Cap-specific mRNA (nucleoside-2'-O-)-methyltransferase 1 (846 aa).

The segment at 1-81 is disordered; that stretch reads MKRKSDSEQQ…LPDTLAEGSS (81 aa). The short motif at 2-20 is the Bipartite nuclear localization signal element; sequence KRKSDSEQQPSVQCRKKKR. A compositionally biased stretch (polar residues) spans 27–45; it reads NLSSTSDDDTQYSNHGTQE. In terms of domain architecture, G-patch spans 87–133; that stretch reads YNSVSQKLMAKMGFREGEGLGKFGQGRKEIVETSKQKGRRGLGMVLK. Substrate contacts are provided by residues 203 to 207 and arginine 218; that span reads KSAFD. Residues 231–450 enclose the RrmJ-type SAM-dependent 2'-O-MTase domain; sequence FFLNRAAMKM…ERYVVCRGLK (220 aa). An S-adenosyl-L-methionine-binding site is contributed by asparagine 234. The active site involves lysine 239. Residues 277–283 and 335–336 contribute to the S-adenosyl-L-methionine site; these read CAGPGGF and DV. Aspartate 364 is a catalytic residue. Position 374–376 (374–376) interacts with substrate; it reads NIQ. The Proton acceptor role is filled by lysine 404. Asparagine 439 serves as a coordination point for substrate. The region spanning 752 to 786 is the WW domain; the sequence is KTINEPWSMAYSKSQKRKYFYNSKTKNSQFELPVE.

It localises to the nucleus. The catalysed reaction is a 5'-end (N(7)-methyl 5'-triphosphoguanosine)-ribonucleoside in mRNA + S-adenosyl-L-methionine = a 5'-end (N(7)-methyl 5'-triphosphoguanosine)-(2'-O-methyl-ribonucleoside) in mRNA + S-adenosyl-L-homocysteine + H(+). In terms of biological role, S-adenosyl-L-methionine-dependent methyltransferase that mediates mRNA cap1 2'-O-ribose methylation to the 5'-cap structure of mRNAs. Methylates the ribose of the first nucleotide of a m(7)GpppG-capped mRNA and small nuclear RNA (snRNA) to produce m(7)GpppRm (cap1). Displays a preference for cap0 transcripts. Cap1 modification is linked to higher levels of translation. May be involved in the interferon response pathway. This is Cap-specific mRNA (nucleoside-2'-O-)-methyltransferase 1 (cmtr1) from Xenopus laevis (African clawed frog).